The chain runs to 312 residues: Aspartate carbamoyltransferase catalytic subunit (312 aa).

The carbamoyl phosphate site is built by arginine 57 and threonine 58. An L-aspartate-binding site is contributed by lysine 85. Carbamoyl phosphate-binding residues include arginine 107, histidine 135, and glutamine 138. The L-aspartate site is built by arginine 168 and arginine 222. Residues glycine 264 and proline 265 each coordinate carbamoyl phosphate.

This sequence belongs to the aspartate/ornithine carbamoyltransferase superfamily. ATCase family. In terms of assembly, heterododecamer (2C3:3R2) of six catalytic PyrB chains organized as two trimers (C3), and six regulatory PyrI chains organized as three dimers (R2).

It carries out the reaction carbamoyl phosphate + L-aspartate = N-carbamoyl-L-aspartate + phosphate + H(+). It functions in the pathway pyrimidine metabolism; UMP biosynthesis via de novo pathway; (S)-dihydroorotate from bicarbonate: step 2/3. In terms of biological role, catalyzes the condensation of carbamoyl phosphate and aspartate to form carbamoyl aspartate and inorganic phosphate, the committed step in the de novo pyrimidine nucleotide biosynthesis pathway. The sequence is that of Aspartate carbamoyltransferase catalytic subunit from Carboxydothermus hydrogenoformans (strain ATCC BAA-161 / DSM 6008 / Z-2901).